The chain runs to 323 residues: Olfactory receptor 6T1 (323 aa).

Topologically, residues 1–25 (MNPENWTQVTSFVLLGFPSSHLIQF) are extracellular. N-linked (GlcNAc...) asparagine glycosylation is present at N5. A helical membrane pass occupies residues 26 to 46 (LVFLGLMVTYIVTATGKLLII). The Cytoplasmic portion of the chain corresponds to 47 to 54 (VLSWIDQR). A helical membrane pass occupies residues 55–75 (LHIQMYFFLRNFSFLELLLVT). Topologically, residues 76–99 (VVVPKMLVVILTGDHTISFVSCII) are extracellular. A disulfide bridge connects residues C97 and C189. The helical transmembrane segment at 100-120 (QSYLYFFLGTTDFFLLAVMSL) threads the bilayer. The Cytoplasmic segment spans residues 121–139 (DRYLAICRPLRYETLMNGH). A helical transmembrane segment spans residues 140–160 (VCSQLVLASWLAGFLWVLCPT). Topologically, residues 161–197 (VLMASLPFCGPNGIDHFFRDSWPLLRLSCGDTHLLKL) are extracellular. Residues 198–217 (VAFMLSTLVLLGSLALTSVS) form a helical membrane-spanning segment. The Cytoplasmic portion of the chain corresponds to 218 to 237 (YACILATVLRAPTAAERRKA). A helical transmembrane segment spans residues 238-258 (FSTCASHLTVVVIIYGSSIFL). Topologically, residues 259–271 (YIRMSEAQSKLLN) are extracellular. Residues 272–292 (KGASVLSCIITPLLNPFIFTL) traverse the membrane as a helical segment. Topologically, residues 293–323 (RNDKVQQALREALGWPRLTAVMKLRVTSQRK) are cytoplasmic.

This sequence belongs to the G-protein coupled receptor 1 family.

The protein resides in the cell membrane. In terms of biological role, odorant receptor. The polypeptide is Olfactory receptor 6T1 (OR6T1) (Homo sapiens (Human)).